Here is a 274-residue protein sequence, read N- to C-terminus: 4-deoxy-L-threo-5-hexosulose-uronate ketol-isomerase (274 aa).

Positions 192, 194, 199, and 241 each coordinate Zn(2+).

The protein belongs to the KduI family. Zn(2+) is required as a cofactor.

The catalysed reaction is 5-dehydro-4-deoxy-D-glucuronate = 3-deoxy-D-glycero-2,5-hexodiulosonate. The protein operates within glycan metabolism; pectin degradation; 2-dehydro-3-deoxy-D-gluconate from pectin: step 4/5. Catalyzes the isomerization of 5-dehydro-4-deoxy-D-glucuronate to 3-deoxy-D-glycero-2,5-hexodiulosonate. This chain is 4-deoxy-L-threo-5-hexosulose-uronate ketol-isomerase, found in Agrobacterium fabrum (strain C58 / ATCC 33970) (Agrobacterium tumefaciens (strain C58)).